The following is a 301-amino-acid chain: Small ribosomal subunit protein uS2 (301 aa).

The segment at 282 to 301 (VRKQPVSENENVEAAAAEQK) is disordered. Over residues 289–301 (ENENVEAAAAEQK) the composition is skewed to low complexity.

This sequence belongs to the universal ribosomal protein uS2 family.

The sequence is that of Small ribosomal subunit protein uS2 from Koribacter versatilis (strain Ellin345).